Reading from the N-terminus, the 209-residue chain is Imidazole glycerol phosphate synthase subunit HisH (209 aa).

The region spanning 5–209 (AIAIIDYDMG…LRNFVALVKD (205 aa)) is the Glutamine amidotransferase type-1 domain. The active-site Nucleophile is C83. Catalysis depends on residues H188 and E190.

Heterodimer of HisH and HisF.

The protein resides in the cytoplasm. The catalysed reaction is 5-[(5-phospho-1-deoxy-D-ribulos-1-ylimino)methylamino]-1-(5-phospho-beta-D-ribosyl)imidazole-4-carboxamide + L-glutamine = D-erythro-1-(imidazol-4-yl)glycerol 3-phosphate + 5-amino-1-(5-phospho-beta-D-ribosyl)imidazole-4-carboxamide + L-glutamate + H(+). The enzyme catalyses L-glutamine + H2O = L-glutamate + NH4(+). It participates in amino-acid biosynthesis; L-histidine biosynthesis; L-histidine from 5-phospho-alpha-D-ribose 1-diphosphate: step 5/9. Functionally, IGPS catalyzes the conversion of PRFAR and glutamine to IGP, AICAR and glutamate. The HisH subunit catalyzes the hydrolysis of glutamine to glutamate and ammonia as part of the synthesis of IGP and AICAR. The resulting ammonia molecule is channeled to the active site of HisF. This chain is Imidazole glycerol phosphate synthase subunit HisH, found in Thermosynechococcus vestitus (strain NIES-2133 / IAM M-273 / BP-1).